Reading from the N-terminus, the 2947-residue chain is 3'-5' exoribonuclease HELZ2 (2947 aa).

Residues 85–114 form a C3H1-type 1 zinc finger; that stretch reads PMRYQVCHYYRPGLGCRRHWNRCTFARSPE. The C2H2-type zinc-finger motif lies at 167-187; sequence CFTCCPPCLCPVDPRGHCPKH. The C3H1-type 2 zinc finger occupies 221–245; the sequence is YCMYVGRGVPCRHGASRCEYAHSAV. The segment at 289-311 adopts a C2H2-type; atypical zinc-finger fold; the sequence is CHACLVTCNSQEAFENHCSSLEH. The UvrD-like helicase ATP-binding domain occupies 769 to 1317; the sequence is VGLIAGRRPE…ELLDESQQVT (549 aa). 790–797 contacts ATP; it reads GPFGTGKT. The interaction with THRAP3 stretch occupies residues 809 to 1290; it reads QQPHTKVLIC…GGMSEEDSES (482 aa). A DEAA box motif is present at residues 913-916; the sequence is DEAA. A disordered region spans residues 1260–1292; the sequence is EDTASGNSASRDAAAEVSTLEGGMSEEDSESDF. 4 short sequence motifs (LXXLL motif) span residues 1306–1310, 1348–1352, 1403–1407, and 2240–2244; these read LKELL, LWKFL, LVQIL, and LEGLP. Arg2381 is subject to Omega-N-methylarginine. The tract at residues 2413-2947 is interaction with THRAP3; sequence PEPCRGNWPR…RVQRKSALSS (535 aa). The UvrD-like helicase ATP-binding 2 domain occupies 2449-2726; the sequence is LNQSQDRAVR…IMLDTQYRMH (278 aa). 2470–2477 serves as a coordination point for ATP; that stretch reads GPPGTGKT. Residues 2525–2529 carry the LXXLL motif 5 motif; the sequence is LGGLL.

It belongs to the DNA2/NAM7 helicase family. As to quaternary structure, interacts with PPARA (via DNA-binding domain) and PPARG; the interaction stimulates the transcriptional activity of PPARA and PPARG. Interacts with THRAP3; the interaction is direct and HELZ2 and THRAP3 synergistically enhance the transcriptional activity of PPARG. It is probably part of the peroxisome proliferator activated receptor alpha interacting complex (PRIC).

The protein resides in the cytoplasm. The enzyme catalyses Exonucleolytic cleavage in the 3'- to 5'-direction to yield nucleoside 5'-phosphates.. It carries out the reaction ATP + H2O = ADP + phosphate + H(+). In terms of biological role, can degrade highly structured RNAs through its concerted ATP-dependent RNA helicase and 3' to 5' exoribonuclease activities. Shows a strong preference for pyrimidine over purine residues for its nuclease activity. Acts as a transcriptional coactivator for a number of nuclear receptors including PPARA, PPARG, THRA, THRB and RXRA. This chain is 3'-5' exoribonuclease HELZ2 (Helz2), found in Mus musculus (Mouse).